A 357-amino-acid polypeptide reads, in one-letter code: Holliday junction branch migration complex subunit RuvB (357 aa).

The segment covering 1 to 15 has biased composition (low complexity); that stretch reads MAIQSDSLSSLPDSP. The tract at residues 1–30 is disordered; the sequence is MAIQSDSLSSLPDSPRIVAPQPVSPNEESI. Residues 13–195 form a large ATPase domain (RuvB-L) region; that stretch reads DSPRIVAPQP…FGIVSRLEFY (183 aa). Residues Leu-34, Arg-35, Gly-76, Lys-79, Thr-80, Thr-81, 142–144, Arg-185, Tyr-195, and Arg-232 contribute to the ATP site; that span reads EDF. Thr-80 contributes to the Mg(2+) binding site. Residues 196–266 form a small ATPAse domain (RuvB-S) region; that stretch reads NTDELARIVT…AAGRALAMLD (71 aa). Residues 269–357 form a head domain (RuvB-H) region; that stretch reads PQGLDVMDRK…SGGTGELFSK (89 aa). Positions 305, 324, and 329 each coordinate DNA.

Belongs to the RuvB family. In terms of assembly, homohexamer. Forms an RuvA(8)-RuvB(12)-Holliday junction (HJ) complex. HJ DNA is sandwiched between 2 RuvA tetramers; dsDNA enters through RuvA and exits via RuvB. An RuvB hexamer assembles on each DNA strand where it exits the tetramer. Each RuvB hexamer is contacted by two RuvA subunits (via domain III) on 2 adjacent RuvB subunits; this complex drives branch migration. In the full resolvosome a probable DNA-RuvA(4)-RuvB(12)-RuvC(2) complex forms which resolves the HJ.

It is found in the cytoplasm. The enzyme catalyses ATP + H2O = ADP + phosphate + H(+). Functionally, the RuvA-RuvB-RuvC complex processes Holliday junction (HJ) DNA during genetic recombination and DNA repair, while the RuvA-RuvB complex plays an important role in the rescue of blocked DNA replication forks via replication fork reversal (RFR). RuvA specifically binds to HJ cruciform DNA, conferring on it an open structure. The RuvB hexamer acts as an ATP-dependent pump, pulling dsDNA into and through the RuvAB complex. RuvB forms 2 homohexamers on either side of HJ DNA bound by 1 or 2 RuvA tetramers; 4 subunits per hexamer contact DNA at a time. Coordinated motions by a converter formed by DNA-disengaged RuvB subunits stimulates ATP hydrolysis and nucleotide exchange. Immobilization of the converter enables RuvB to convert the ATP-contained energy into a lever motion, pulling 2 nucleotides of DNA out of the RuvA tetramer per ATP hydrolyzed, thus driving DNA branch migration. The RuvB motors rotate together with the DNA substrate, which together with the progressing nucleotide cycle form the mechanistic basis for DNA recombination by continuous HJ branch migration. Branch migration allows RuvC to scan DNA until it finds its consensus sequence, where it cleaves and resolves cruciform DNA. The sequence is that of Holliday junction branch migration complex subunit RuvB from Bordetella parapertussis (strain 12822 / ATCC BAA-587 / NCTC 13253).